We begin with the raw amino-acid sequence, 344 residues long: L-rhamnose-proton symporter (344 aa).

The next 10 membrane-spanning stretches (helical) occupy residues Ala4–Ala24, Trp38–Leu58, Phe68–Ile88, Met101–Ile121, Thr137–Leu157, Leu175–Ala195, Leu214–Ile234, Val259–Gly279, Ile290–Leu310, and Val323–Ala343.

It belongs to the L-rhamnose transporter (TC 2.A.7.6) family.

Its subcellular location is the cell inner membrane. It catalyses the reaction L-rhamnopyranose(in) + H(+)(in) = L-rhamnopyranose(out) + H(+)(out). In terms of biological role, uptake of L-rhamnose across the cytoplasmic membrane with the concomitant transport of protons into the cell (symport system). This chain is L-rhamnose-proton symporter, found in Escherichia coli O157:H7.